Here is a 249-residue protein sequence, read N- to C-terminus: UPF0696 protein C11orf68 homolog (249 aa).

Belongs to the UPF0696 family.

The polypeptide is UPF0696 protein C11orf68 homolog (Danio rerio (Zebrafish)).